Reading from the N-terminus, the 67-residue chain is DNA-directed RNA polymerase subunit omega (67 aa).

The protein belongs to the RNA polymerase subunit omega family. In terms of assembly, the RNAP catalytic core consists of 2 alpha, 1 beta, 1 beta' and 1 omega subunit. When a sigma factor is associated with the core the holoenzyme is formed, which can initiate transcription.

The catalysed reaction is RNA(n) + a ribonucleoside 5'-triphosphate = RNA(n+1) + diphosphate. Its function is as follows. Promotes RNA polymerase assembly. Latches the N- and C-terminal regions of the beta' subunit thereby facilitating its interaction with the beta and alpha subunits. This is DNA-directed RNA polymerase subunit omega from Burkholderia ambifaria (strain ATCC BAA-244 / DSM 16087 / CCUG 44356 / LMG 19182 / AMMD) (Burkholderia cepacia (strain AMMD)).